A 160-amino-acid polypeptide reads, in one-letter code: MREMRVGHGYDVHVLVENRRLIIGGVEIPYERGLAGHSDADVLLHAICDALLGAVGLGDIGRHFPDTDAAFAGIDSRILLRRVAQQLKERAWQVGNVDATIIAQAPKMAPHIARMTAHIADDLGVAIDRVNVKATTTERLGFAGRGEGIAAEAVCLIERG.

A divalent metal cation contacts are provided by Asp11 and His13. Residues 11–13 and 37–38 contribute to the 4-CDP-2-C-methyl-D-erythritol 2-phosphate site; these read DVH and HS. His45 contacts a divalent metal cation. 4-CDP-2-C-methyl-D-erythritol 2-phosphate-binding positions include 59-61, 64-68, 103-109, 135-138, Phe142, and Arg145; these read DIG, FPDTD, AQAPKMA, and TTTE.

Belongs to the IspF family. In terms of assembly, homotrimer. A divalent metal cation serves as cofactor.

The catalysed reaction is 4-CDP-2-C-methyl-D-erythritol 2-phosphate = 2-C-methyl-D-erythritol 2,4-cyclic diphosphate + CMP. It participates in isoprenoid biosynthesis; isopentenyl diphosphate biosynthesis via DXP pathway; isopentenyl diphosphate from 1-deoxy-D-xylulose 5-phosphate: step 4/6. Involved in the biosynthesis of isopentenyl diphosphate (IPP) and dimethylallyl diphosphate (DMAPP), two major building blocks of isoprenoid compounds. Catalyzes the conversion of 4-diphosphocytidyl-2-C-methyl-D-erythritol 2-phosphate (CDP-ME2P) to 2-C-methyl-D-erythritol 2,4-cyclodiphosphate (ME-CPP) with a corresponding release of cytidine 5-monophosphate (CMP). This chain is 2-C-methyl-D-erythritol 2,4-cyclodiphosphate synthase, found in Thiobacillus denitrificans (strain ATCC 25259 / T1).